We begin with the raw amino-acid sequence, 348 residues long: Centromere protein L (348 aa).

This sequence belongs to the CENP-L/IML3 family.

It is found in the nucleus. Its subcellular location is the chromosome. The protein resides in the centromere. Its function is as follows. Probable component of a centromeric complex involved in assembly of kinetochore proteins, mitotic progression and chromosome segregation. This chain is Centromere protein L (cenpl), found in Xenopus tropicalis (Western clawed frog).